The primary structure comprises 363 residues: Cyanide hydratase (363 aa).

The region spanning 6–285 is the CN hydrolase domain; that stretch reads YKAACVTSEP…DGLLFVDIDL (280 aa). Glutamate 46 (proton acceptor) is an active-site residue. Residue lysine 128 is part of the active site. Cysteine 163 serves as the catalytic Nucleophile.

It belongs to the carbon-nitrogen hydrolase superfamily. Nitrilase family. Oligomer of dimers, forming left-handed helical fibers.

The catalysed reaction is formamide = hydrogen cyanide + H2O. Functionally, catalyzes the hydration of cyanide to formamide. Degradation of cyanide may be important for plant pathogenic fungi in infection of cyanogenic plants. The chain is Cyanide hydratase (CyhAB) from Alternaria brassicicola (Dark leaf spot agent).